The following is a 430-amino-acid chain: Hydrogenobyrinate a,c-diamide synthase (430 aa).

A GATase cobBQ-type domain is found at 239–422 (RIGVARDAAF…IHFYLPSDPL (184 aa)). C321 serves as the catalytic Nucleophile.

Belongs to the CobB/CbiA family. The cofactor is Mg(2+).

The enzyme catalyses hydrogenobyrinate + 2 L-glutamine + 2 ATP + 2 H2O = hydrogenobyrinate a,c-diamide + 2 L-glutamate + 2 ADP + 2 phosphate + 2 H(+). It participates in cofactor biosynthesis; adenosylcobalamin biosynthesis; cob(II)yrinate a,c-diamide from precorrin-2 (aerobic route): step 9/10. Its function is as follows. Catalyzes the ATP-dependent amidation of the two carboxylate groups at positions a and c of hydrogenobyrinate, using either L-glutamine or ammonia as the nitrogen source. This Stutzerimonas stutzeri (strain A1501) (Pseudomonas stutzeri) protein is Hydrogenobyrinate a,c-diamide synthase.